The sequence spans 197 residues: Prefoldin subunit 3 (197 aa).

A disordered region spans residues 1–26; it reads MASLALRGSSENPAPTKDTTTNPRGI. Residues 9–23 are compositionally biased toward polar residues; that stretch reads SSENPAPTKDTTTNP.

The protein belongs to the prefoldin subunit alpha family. In terms of assembly, heterohexamer of two PFD-alpha type and four PFD-beta type subunits.

Its function is as follows. Prefoldin subunit; part of the gene cluster that mediates the biosynthesis of elsinochromes, pigments consisting of at least four interconvertible tautomers (A, B, C and D) that have a core phenolic quinone to which various side chains are attached and which play an important role in fungal pathogenesis. The non-reducing polyketide synthase PKS1 was proposed to iteratively catalyze decarboxylation between acetyl-CoA and malonyl-CoA subunits for polyketide chain elongation. The released polyketide undergoes cyclization to form an aromatic ring, and proceeds via serial modification steps to produce the heptaketide back- bone of elsinochrome. As elsinochrome has a symmetrical structure, two identical heptaketides are fused to form a core 1,2-dihydrobenzo-perylene ring structure, which can then be successively modified to produce the various derivatives of elsinochrome. Some of these reactions may be cooperatively carried out, at least in part, by the products of RDT1, OXR1 and PKS1. PRF1, embedded within the elsinochrome cluster possibly functions to stabilize some of the biosynthetic enzymes required for elsinochrome production. As prefoldin is a hexamer containing 2 a and 4 b subunits, additional prefoldin subunits, whose coding genes may not immediately link to the elsinochrome biosynthetic gene cluster, are required to fulfill the chaperone function. In addition, no methyltransferase-coding gene exists within the biosynthetic gene cluster, even though elsinochrome has four methyl groups at positions C3, C7, C8 and C12. Apparently, the identified gene cluster does not contain the entire entourage of genes responsible for elsinochrome biosynthesis. Once elsinochrome is synthesized, it must be exported outside the fungal cells, which is probably accomplished by the ECT1 transporter, to avoid toxicity. This chain is Prefoldin subunit 3, found in Elsinoe fawcettii (Citrus scab fungus).